Reading from the N-terminus, the 260-residue chain is Snake venom serine protease KN14 (260 aa).

An N-terminal signal peptide occupies residues 1-18; sequence MVLIRVLANLLILQLSYA. Residues 19 to 24 constitute a propeptide that is removed on maturation; the sequence is QKSSEL. The Peptidase S1 domain occupies 25-251; the sequence is VIGGDECNIN…HLDWIQSIIA (227 aa). 5 disulfides stabilise this stretch: Cys31/Cys165, Cys100/Cys258, Cys144/Cys212, Cys176/Cys191, and Cys202/Cys227. His67 (charge relay system) is an active-site residue. Asn105 carries N-linked (GlcNAc...) asparagine glycosylation. The active-site Charge relay system is Asp112. N-linked (GlcNAc...) asparagine glycosylation is present at Asn172. Residue Ser206 is the Charge relay system of the active site. Asn213 and Asn255 each carry an N-linked (GlcNAc...) asparagine glycan.

This sequence belongs to the peptidase S1 family. Snake venom subfamily. As to quaternary structure, monomer. Expressed by the venom gland.

Its subcellular location is the secreted. Functionally, snake venom serine protease that may act in the hemostasis system of the prey. The sequence is that of Snake venom serine protease KN14 from Trimeresurus stejnegeri (Chinese green tree viper).